Here is a 254-residue protein sequence, read N- to C-terminus: Leucyl/phenylalanyl-tRNA--protein transferase (254 aa).

It belongs to the L/F-transferase family.

It is found in the cytoplasm. It catalyses the reaction N-terminal L-lysyl-[protein] + L-leucyl-tRNA(Leu) = N-terminal L-leucyl-L-lysyl-[protein] + tRNA(Leu) + H(+). It carries out the reaction N-terminal L-arginyl-[protein] + L-leucyl-tRNA(Leu) = N-terminal L-leucyl-L-arginyl-[protein] + tRNA(Leu) + H(+). The enzyme catalyses L-phenylalanyl-tRNA(Phe) + an N-terminal L-alpha-aminoacyl-[protein] = an N-terminal L-phenylalanyl-L-alpha-aminoacyl-[protein] + tRNA(Phe). Functions in the N-end rule pathway of protein degradation where it conjugates Leu, Phe and, less efficiently, Met from aminoacyl-tRNAs to the N-termini of proteins containing an N-terminal arginine or lysine. This is Leucyl/phenylalanyl-tRNA--protein transferase from Burkholderia lata (strain ATCC 17760 / DSM 23089 / LMG 22485 / NCIMB 9086 / R18194 / 383).